A 258-amino-acid polypeptide reads, in one-letter code: Acetylglutamate kinase (258 aa).

Residues 44-45, R66, and N158 contribute to the substrate site; that span reads GG. ATP-binding positions include 181 to 186 and 209 to 211; these read DVSGIL and IIT.

It belongs to the acetylglutamate kinase family. ArgB subfamily. As to quaternary structure, homodimer.

It localises to the cytoplasm. The catalysed reaction is N-acetyl-L-glutamate + ATP = N-acetyl-L-glutamyl 5-phosphate + ADP. It functions in the pathway amino-acid biosynthesis; L-arginine biosynthesis; N(2)-acetyl-L-ornithine from L-glutamate: step 2/4. Functionally, catalyzes the ATP-dependent phosphorylation of N-acetyl-L-glutamate. In Shigella flexneri, this protein is Acetylglutamate kinase.